A 137-amino-acid chain; its full sequence is Nucleoside diphosphate kinase (137 aa).

6 residues coordinate ATP: K9, F57, R85, T91, R102, and N112. The active-site Pros-phosphohistidine intermediate is the H115.

The protein belongs to the NDK family. As to quaternary structure, homotetramer. The cofactor is Mg(2+).

It is found in the cytoplasm. It catalyses the reaction a 2'-deoxyribonucleoside 5'-diphosphate + ATP = a 2'-deoxyribonucleoside 5'-triphosphate + ADP. It carries out the reaction a ribonucleoside 5'-diphosphate + ATP = a ribonucleoside 5'-triphosphate + ADP. Major role in the synthesis of nucleoside triphosphates other than ATP. The ATP gamma phosphate is transferred to the NDP beta phosphate via a ping-pong mechanism, using a phosphorylated active-site intermediate. In Campylobacter jejuni subsp. jejuni serotype O:23/36 (strain 81-176), this protein is Nucleoside diphosphate kinase.